Consider the following 179-residue polypeptide: Dual-action ribosomal maturation protein DarP (179 aa).

This sequence belongs to the DarP family.

The protein localises to the cytoplasm. Member of a network of 50S ribosomal subunit biogenesis factors which assembles along the 30S-50S interface, preventing incorrect 23S rRNA structures from forming. Promotes peptidyl transferase center (PTC) maturation. The sequence is that of Dual-action ribosomal maturation protein DarP from Photorhabdus laumondii subsp. laumondii (strain DSM 15139 / CIP 105565 / TT01) (Photorhabdus luminescens subsp. laumondii).